The primary structure comprises 447 residues: UPF0210 protein Ldb1026 (447 aa).

This sequence belongs to the UPF0210 family. Homodimer.

This Lactobacillus delbrueckii subsp. bulgaricus (strain ATCC 11842 / DSM 20081 / BCRC 10696 / JCM 1002 / NBRC 13953 / NCIMB 11778 / NCTC 12712 / WDCM 00102 / Lb 14) protein is UPF0210 protein Ldb1026.